We begin with the raw amino-acid sequence, 207 residues long: ATP-dependent Clp protease proteolytic subunit (207 aa).

The active-site Nucleophile is the Ser111. Residue His136 is part of the active site.

Belongs to the peptidase S14 family. In terms of assembly, fourteen ClpP subunits assemble into 2 heptameric rings which stack back to back to give a disk-like structure with a central cavity, resembling the structure of eukaryotic proteasomes.

It localises to the cytoplasm. It catalyses the reaction Hydrolysis of proteins to small peptides in the presence of ATP and magnesium. alpha-casein is the usual test substrate. In the absence of ATP, only oligopeptides shorter than five residues are hydrolyzed (such as succinyl-Leu-Tyr-|-NHMec, and Leu-Tyr-Leu-|-Tyr-Trp, in which cleavage of the -Tyr-|-Leu- and -Tyr-|-Trp bonds also occurs).. In terms of biological role, cleaves peptides in various proteins in a process that requires ATP hydrolysis. Has a chymotrypsin-like activity. Plays a major role in the degradation of misfolded proteins. The polypeptide is ATP-dependent Clp protease proteolytic subunit (Burkholderia mallei (strain ATCC 23344)).